We begin with the raw amino-acid sequence, 199 residues long: MELKQFDGQKKSELSLIEVAHAILSQHGDVMAFADLTNAVQSYLGKSDEEIRERLSQFYTDLNIDGSFISLGDNMWGLRAWYPFESIDEAVIHTDDDEDEDRPKRKKVNAFLADAGDDDDVIDYDDDDPEDDDNYDDDDDQDDDTDDSASSKYDELAGVDDTDDDVADETLPDGIEGQLSELNDDDDDDDYDDEDDESK.

An HTH HARE-type domain is found at 14 to 81; the sequence is LSLIEVAHAI…GDNMWGLRAW (68 aa). Acidic residues-rich tracts occupy residues 116 to 147, 157 to 171, and 182 to 199; these read GDDD…DTDD, AGVD…DETL, and LNDD…DESK. The tract at residues 116 to 199 is disordered; it reads GDDDDVIDYD…DYDDEDDESK (84 aa).

This sequence belongs to the RpoE family. RNAP is composed of a core of 2 alpha, a beta and a beta' subunits. The core is associated with a delta subunit and one of several sigma factors.

Its function is as follows. Participates in both the initiation and recycling phases of transcription. In the presence of the delta subunit, RNAP displays an increased specificity of transcription, a decreased affinity for nucleic acids, and an increased efficiency of RNA synthesis because of enhanced recycling. This is Probable DNA-directed RNA polymerase subunit delta from Lactiplantibacillus plantarum (strain ATCC BAA-793 / NCIMB 8826 / WCFS1) (Lactobacillus plantarum).